The primary structure comprises 279 residues: MAIKTYKPTTNGRRNMSGFDFSVITKTTPEKSLLAKKSKTGARNAEGRMTVRHHGGGHKQQYRIIDFKRIKDDKTATVKAIEYDPNRTANIALLVYEDGVKSYILAPKGLEAGTKVQSGPDADIKVGNALPLGNIPEGTLIHNIELKPGKGGQLARSAGTSAQILGKDDAGKYVIIRLSSGEVRMIPATSRATIGEVGNAEHSLISWGKAGRSRWRGKTPHVRGSVMNPNDHPHGGGEGKAPVGHPSPMSPWGKKSYGKKTRDKKKPSTKFIVRGRKGK.

Basic residues-rich tracts occupy residues 211–221 (GRSRWRGKTPH) and 256–279 (SYGK…RKGK). The tract at residues 211–279 (GRSRWRGKTP…KFIVRGRKGK (69 aa)) is disordered.

Belongs to the universal ribosomal protein uL2 family. Part of the 50S ribosomal subunit. Forms a bridge to the 30S subunit in the 70S ribosome.

Its function is as follows. One of the primary rRNA binding proteins. Required for association of the 30S and 50S subunits to form the 70S ribosome, for tRNA binding and peptide bond formation. It has been suggested to have peptidyltransferase activity; this is somewhat controversial. Makes several contacts with the 16S rRNA in the 70S ribosome. In Oenococcus oeni (strain ATCC BAA-331 / PSU-1), this protein is Large ribosomal subunit protein uL2.